A 279-amino-acid polypeptide reads, in one-letter code: DegV domain-containing protein spr1019 (279 aa).

In terms of domain architecture, DegV spans 4-277; sequence IKIVTDSSVT…ENAWAILIRY (274 aa). Hexadecanoate contacts are provided by T62 and S94.

In terms of biological role, may bind long-chain fatty acids, such as palmitate, and may play a role in lipid transport or fatty acid metabolism. This chain is DegV domain-containing protein spr1019, found in Streptococcus pneumoniae (strain ATCC BAA-255 / R6).